Reading from the N-terminus, the 137-residue chain is Acidic phospholipase A2 beta-bungarotoxin A6 chain (137 aa).

The first 9 residues, 1–9 (AVCVSLLGA), serve as a signal peptide directing secretion. A propeptide spanning residues 10 to 17 (ANIPPQHL) is cleaved from the precursor. Cystine bridges form between C44-C136, C46-C62, C61-C117, C68-C110, C78-C103, and C96-C108. 3 residues coordinate Ca(2+): Y45, G47, and G49. H65 is an active-site residue. Residue D66 participates in Ca(2+) binding. D111 is an active-site residue.

It belongs to the phospholipase A2 family. Group I subfamily. D49 sub-subfamily. In terms of assembly, heterodimer; disulfide-linked. The A chains have phospholipase A2 activity and the B chains show homology with the basic protease inhibitors. The cofactor is Ca(2+). Expressed by the venom gland.

It localises to the secreted. The catalysed reaction is a 1,2-diacyl-sn-glycero-3-phosphocholine + H2O = a 1-acyl-sn-glycero-3-phosphocholine + a fatty acid + H(+). In terms of biological role, snake venom phospholipase A2 (PLA2) that inhibits neuromuscular transmission by blocking acetylcholine release from the nerve termini. PLA2 catalyzes the calcium-dependent hydrolysis of the 2-acyl groups in 3-sn-phosphoglycerides. In Bungarus multicinctus (Many-banded krait), this protein is Acidic phospholipase A2 beta-bungarotoxin A6 chain.